Consider the following 288-residue polypeptide: Thymidylate synthase (288 aa).

DUMP-binding positions include Arg-21 and 150–151 (RR). Residue Cys-170 is the Nucleophile of the active site. DUMP is bound by residues 190–193 (RSGD), Asn-201, and 231–233 (HIY). Position 193 (Asp-193) interacts with (6R)-5,10-methylene-5,6,7,8-tetrahydrofolate. (6R)-5,10-methylene-5,6,7,8-tetrahydrofolate is bound at residue Ala-287.

The protein belongs to the thymidylate synthase family. Bacterial-type ThyA subfamily. Homodimer.

The protein resides in the cytoplasm. It carries out the reaction dUMP + (6R)-5,10-methylene-5,6,7,8-tetrahydrofolate = 7,8-dihydrofolate + dTMP. The protein operates within pyrimidine metabolism; dTTP biosynthesis. Functionally, catalyzes the reductive methylation of 2'-deoxyuridine-5'-monophosphate (dUMP) to 2'-deoxythymidine-5'-monophosphate (dTMP) while utilizing 5,10-methylenetetrahydrofolate (mTHF) as the methyl donor and reductant in the reaction, yielding dihydrofolate (DHF) as a by-product. This enzymatic reaction provides an intracellular de novo source of dTMP, an essential precursor for DNA biosynthesis. The sequence is that of Thymidylate synthase from Acholeplasma laidlawii (strain PG-8A).